The chain runs to 129 residues: UPF0102 protein amb4503 (129 aa).

Belongs to the UPF0102 family.

This chain is UPF0102 protein amb4503, found in Paramagnetospirillum magneticum (strain ATCC 700264 / AMB-1) (Magnetospirillum magneticum).